A 366-amino-acid chain; its full sequence is Ribosomal RNA large subunit methyltransferase M (366 aa).

S-adenosyl-L-methionine contacts are provided by residues Ser188, 221 to 224, Asp240, Asp260, and Asp277; that span reads CPGG. The active-site Proton acceptor is the Lys306.

The protein belongs to the class I-like SAM-binding methyltransferase superfamily. RNA methyltransferase RlmE family. RlmM subfamily. Monomer.

The protein resides in the cytoplasm. The catalysed reaction is cytidine(2498) in 23S rRNA + S-adenosyl-L-methionine = 2'-O-methylcytidine(2498) in 23S rRNA + S-adenosyl-L-homocysteine + H(+). Functionally, catalyzes the 2'-O-methylation at nucleotide C2498 in 23S rRNA. This is Ribosomal RNA large subunit methyltransferase M from Escherichia coli O45:K1 (strain S88 / ExPEC).